A 301-amino-acid chain; its full sequence is tRNA dimethylallyltransferase (301 aa).

5–12 (GPTASGKS) serves as a coordination point for ATP. 7–12 (TASGKS) lines the substrate pocket. Residues 30–33 (DSMQ) form an interaction with substrate tRNA region.

It belongs to the IPP transferase family. Monomer. The cofactor is Mg(2+).

It catalyses the reaction adenosine(37) in tRNA + dimethylallyl diphosphate = N(6)-dimethylallyladenosine(37) in tRNA + diphosphate. Functionally, catalyzes the transfer of a dimethylallyl group onto the adenine at position 37 in tRNAs that read codons beginning with uridine, leading to the formation of N6-(dimethylallyl)adenosine (i(6)A). This is tRNA dimethylallyltransferase from Rhodopseudomonas palustris (strain TIE-1).